Consider the following 619-residue polypeptide: 1-deoxy-D-xylulose-5-phosphate synthase (619 aa).

Thiamine diphosphate is bound by residues histidine 74 and glycine 115–serine 117. Aspartate 146 provides a ligand contact to Mg(2+). Residues glycine 147 to alanine 148, asparagine 175, tyrosine 285, and glutamate 365 each bind thiamine diphosphate. Mg(2+) is bound at residue asparagine 175.

It belongs to the transketolase family. DXPS subfamily. In terms of assembly, homodimer. Requires Mg(2+) as cofactor. It depends on thiamine diphosphate as a cofactor.

It catalyses the reaction D-glyceraldehyde 3-phosphate + pyruvate + H(+) = 1-deoxy-D-xylulose 5-phosphate + CO2. It participates in metabolic intermediate biosynthesis; 1-deoxy-D-xylulose 5-phosphate biosynthesis; 1-deoxy-D-xylulose 5-phosphate from D-glyceraldehyde 3-phosphate and pyruvate: step 1/1. Catalyzes the acyloin condensation reaction between C atoms 2 and 3 of pyruvate and glyceraldehyde 3-phosphate to yield 1-deoxy-D-xylulose-5-phosphate (DXP). This Clostridium perfringens (strain SM101 / Type A) protein is 1-deoxy-D-xylulose-5-phosphate synthase.